The sequence spans 153 residues: Glucose-6-phosphate 1-dehydrogenase (153 aa).

2 residues coordinate NADP(+): Arg21 and Lys120. Residue Lys120 coordinates D-glucose 6-phosphate.

It belongs to the glucose-6-phosphate dehydrogenase family.

It localises to the cytoplasm. The protein localises to the cytosol. It catalyses the reaction D-glucose 6-phosphate + NADP(+) = 6-phospho-D-glucono-1,5-lactone + NADPH + H(+). The protein operates within carbohydrate degradation; pentose phosphate pathway; D-ribulose 5-phosphate from D-glucose 6-phosphate (oxidative stage): step 1/3. In terms of biological role, cytosolic glucose-6-phosphate dehydrogenase that catalyzes the first and rate-limiting step of the oxidative branch within the pentose phosphate pathway/shunt, an alternative route to glycolysis for the dissimilation of carbohydrates and a major source of reducing power and metabolic intermediates for fatty acid and nucleic acid biosynthetic processes. In Hyalophora cecropia (Cecropia moth), this protein is Glucose-6-phosphate 1-dehydrogenase (ZW).